The chain runs to 334 residues: Geranylgeranyl pyrophosphate synthase ltmG (334 aa).

Isopentenyl diphosphate contacts are provided by K53, R56, and H85. 2 residues coordinate Mg(2+): D92 and D96. R101 is a binding site for dimethylallyl diphosphate. R102 is an isopentenyl diphosphate binding site. Dimethylallyl diphosphate contacts are provided by K179, T180, and Q213. D216 serves as a coordination point for Mg(2+). Dimethylallyl diphosphate-binding residues include N220, K230, and K240.

The protein belongs to the FPP/GGPP synthase family. It depends on Mg(2+) as a cofactor.

The catalysed reaction is isopentenyl diphosphate + dimethylallyl diphosphate = (2E)-geranyl diphosphate + diphosphate. It carries out the reaction isopentenyl diphosphate + (2E)-geranyl diphosphate = (2E,6E)-farnesyl diphosphate + diphosphate. The enzyme catalyses isopentenyl diphosphate + (2E,6E)-farnesyl diphosphate = (2E,6E,10E)-geranylgeranyl diphosphate + diphosphate. Its pathway is secondary metabolite biosynthesis. In terms of biological role, geranylgeranyl pyrophosphate synthase; part of the gene cluster that mediates the biosynthesis of lolitrems, indole-diterpene mycotoxins that are potent tremorgens in mammals, and are synthesized by clavicipitaceous fungal endophytes in association with their grass hosts. The geranylgeranyl diphosphate (GGPP) synthase ltmG is proposed to catalyze the first step in lolitrem biosynthesis. LtmG catalyzes a series of iterative condensations of isopentenyl diphosphate (IPP) with dimethylallyl diphosphate (DMAPP), geranyl diphosphate (GPP), and farnesyl diphosphate (FPP), to form GGPP. GGPP then condenses with indole-3-glycerol phosphate to form 3-geranylgeranylindole, an acyclic intermediate, to be incorporated into paxilline. Either ltmG or ltmC could be responsible for this step, as both are putative prenyl transferases. The FAD-dependent monooxygenase ltmM then catalyzes the epoxidation of the two terminal alkenes of the geranylgeranyl moiety, which is subsequently cyclized by ltmB, to paspaline. The cytochrome P450 monooxygenases ltmQ and ltmP can sequentially oxidize paspaline to terpendole E and terpendole F. Alternatively, ltmP converts paspaline to an intermediate which is oxidized by ltmQ to terpendole F. LtmF, ltmK, ltmE and ltmJ appear to be unique to the epichloe endophytes. The prenyltransferase ltmF is involved in the 27-hydroxyl-O-prenylation. The cytochrome P450 monooxygenase ltmK is required for the oxidative acetal ring formation. The multi-functional prenyltransferase ltmE is required for C20- and C21-prenylations of the indole ring of paspalanes and acts together with the cytochrome P450 monooxygenase ltmJ to yield lolitremanes by multiple oxidations and ring closures. The stereoisomer pairs of lolitriol and lolitrem N or lolitrem B and lolitrem F may be attributed to variations in the way in which ring closure can occur under the action of ltmJ. While the major product of this pathway is lolitrem B, the prenyl transferases and cytochrome P450 monooxygenases identified in this pathway have a remarkable versatility in their regio- and stereo-specificities to generate a diverse range of metabolites that are products of a metabolic grid rather than a linear pathway. The protein is Geranylgeranyl pyrophosphate synthase ltmG of Epichloe festucae (strain Fl1).